We begin with the raw amino-acid sequence, 443 residues long: Large ribosomal subunit protein mL50 (443 aa).

The segment at 121-145 (QPTRADAPEKIRDPNYEPATSGAGL) is disordered. The segment covering 126–135 (DAPEKIRDPN) has biased composition (basic and acidic residues).

Belongs to the mitochondrion-specific ribosomal protein mL50 family. Component of the mitochondrial large ribosomal subunit (mt-LSU). Mature N.crassa 74S mitochondrial ribosomes consist of a small (37S) and a large (54S) subunit. The 37S small subunit contains a 16S ribosomal RNA (16S mt-rRNA) and 32 different proteins. The 54S large subunit contains a 23S rRNA (23S mt-rRNA) and 42 different proteins.

The protein localises to the mitochondrion. Its function is as follows. Component of the mitochondrial ribosome (mitoribosome), a dedicated translation machinery responsible for the synthesis of mitochondrial genome-encoded proteins, including at least some of the essential transmembrane subunits of the mitochondrial respiratory chain. The mitoribosomes are attached to the mitochondrial inner membrane and translation products are cotranslationally integrated into the membrane. This chain is Large ribosomal subunit protein mL50 (mrpl13), found in Neurospora crassa (strain ATCC 24698 / 74-OR23-1A / CBS 708.71 / DSM 1257 / FGSC 987).